The following is a 113-amino-acid chain: U11-theraphotoxin-Hhn1a (113 aa).

The signal sequence occupies residues 1–21 (MNTVRVTFLLVFVLAVSLGQA). Residues 22-74 (DKDENRMVMQEKTEQGKSYLDFAENLLLQKLEELEAKLLEEDSEESRNSRQKR) constitute a propeptide that is removed on maturation. Cystine bridges form between Cys-75/Cys-90, Cys-82/Cys-95, and Cys-89/Cys-110.

It belongs to the neurotoxin 14 (magi-1) family. 01 (HNTX-16) subfamily. Expressed by the venom gland.

The protein localises to the secreted. Probable ion channel inhibitor. The protein is U11-theraphotoxin-Hhn1a of Cyriopagopus hainanus (Chinese bird spider).